We begin with the raw amino-acid sequence, 397 residues long: Tryptophan synthase beta chain (397 aa).

Lys-86 is subject to N6-(pyridoxal phosphate)lysine.

This sequence belongs to the TrpB family. Tetramer of two alpha and two beta chains. Requires pyridoxal 5'-phosphate as cofactor.

The enzyme catalyses (1S,2R)-1-C-(indol-3-yl)glycerol 3-phosphate + L-serine = D-glyceraldehyde 3-phosphate + L-tryptophan + H2O. It participates in amino-acid biosynthesis; L-tryptophan biosynthesis; L-tryptophan from chorismate: step 5/5. Its function is as follows. The beta subunit is responsible for the synthesis of L-tryptophan from indole and L-serine. The sequence is that of Tryptophan synthase beta chain from Aeromonas salmonicida (strain A449).